Reading from the N-terminus, the 385-residue chain is UPF0284 protein PMM0439 (385 aa).

Belongs to the UPF0284 family.

The chain is UPF0284 protein PMM0439 from Prochlorococcus marinus subsp. pastoris (strain CCMP1986 / NIES-2087 / MED4).